A 101-amino-acid chain; its full sequence is Small ribosomal subunit protein uS10 (101 aa).

It belongs to the universal ribosomal protein uS10 family. Part of the 30S ribosomal subunit.

In terms of biological role, involved in the binding of tRNA to the ribosomes. In Saccharopolyspora erythraea (strain ATCC 11635 / DSM 40517 / JCM 4748 / NBRC 13426 / NCIMB 8594 / NRRL 2338), this protein is Small ribosomal subunit protein uS10.